The following is a 251-amino-acid chain: Uridylate kinase (251 aa).

19 to 22 (KLSG) provides a ligand contact to ATP. Gly-61 contributes to the UMP binding site. 2 residues coordinate ATP: Gly-62 and Arg-66. UMP-binding positions include Asp-81 and 142-149 (IGNPFFTT). Positions 169, 170, 175, and 178 each coordinate ATP.

It belongs to the UMP kinase family. In terms of assembly, homohexamer.

The protein localises to the cytoplasm. The enzyme catalyses UMP + ATP = UDP + ADP. The protein operates within pyrimidine metabolism; CTP biosynthesis via de novo pathway; UDP from UMP (UMPK route): step 1/1. Inhibited by UTP. Its function is as follows. Catalyzes the reversible phosphorylation of UMP to UDP. The chain is Uridylate kinase from Hyphomonas neptunium (strain ATCC 15444).